The chain runs to 388 residues: Sex-determination protein fem-3 (388 aa).

Tandem repeats lie at residues 7 to 10 (SDDV), 110 to 113 (ITRF), 141 to 144 (ITRF), 234 to 237 (YHTT), 284 to 287 (YHTT), and 371 to 374 (SDDV).

Component of a complex containing fem-1, fem-2 and fem-3. Interacts with fem-1 and fem-2 (via N-terminus). Part of a E3 ubiquitin-protein ligase complex, at least composed of cul-2, elc-1, tra-1, fem-1, fem-2 and fem-3; mediates the ubiquitination and subsequent proteasomal degradation of tra-1. Interacts with tra-1. Interacts with sel-10. Interacts with tra-2.

Its function is as follows. Required for male development. In XO (male) animals, fem-3 directs male differentiation in all tissues. In XX (hermaphrodite) animals, it specifies the first 80 or so germ cells to be sperm. Negatively regulates male development when bound to tra-2. Together with fem-2 associates with the CBC(fem-1) E3 ubiquitin-protein ligase complex which mediates the ubiquitination and subsequent proteasomal degradation of tra-1. The chain is Sex-determination protein fem-3 (fem-3) from Caenorhabditis elegans.